Reading from the N-terminus, the 475-residue chain is Alpha,alpha-trehalose-phosphate synthase [UDP-forming] (475 aa).

Positions 93 and 147 each coordinate D-glucose 6-phosphate. Residues R285 and K290 each contribute to the UDP site. Residues R285 and K290 each coordinate UDP-alpha-D-glucose. R323 is a D-glucose 6-phosphate binding site. 384-392 (DGMNLVSYE) lines the UDP-alpha-D-glucose pocket. Residue 388–392 (LVSYE) participates in UDP binding.

The protein belongs to the glycosyltransferase 20 family.

The enzyme catalyses D-glucose 6-phosphate + UDP-alpha-D-glucose = alpha,alpha-trehalose 6-phosphate + UDP + H(+). The protein operates within carbohydrate biosynthesis. Its function is as follows. Synthase catalytic subunit of the trehalose synthase complex that catalyzes the production of trehalose from glucose-6-phosphate and UDP-alpha-D-glucose in a two step process. The protein is Alpha,alpha-trehalose-phosphate synthase [UDP-forming] of Pichia angusta (Yeast).